The following is a 564-amino-acid chain: Lamassu protein LmuB (564 aa).

Functionally, component of antiviral defense system Lamassu type II, composed of LmuA and LmuB. Expression of Lamassu type II in B.subtilis (strain BEST7003) confers resistance to phage SpBeta. May be an ATPase. The protein is Lamassu protein LmuB of Bacillus cereus (strain VD014).